The sequence spans 215 residues: Protein-L-isoaspartate O-methyltransferase (215 aa).

Residue Ser-62 is part of the active site.

Belongs to the methyltransferase superfamily. L-isoaspartyl/D-aspartyl protein methyltransferase family.

The protein resides in the cytoplasm. The enzyme catalyses [protein]-L-isoaspartate + S-adenosyl-L-methionine = [protein]-L-isoaspartate alpha-methyl ester + S-adenosyl-L-homocysteine. Functionally, catalyzes the methyl esterification of L-isoaspartyl residues in peptides and proteins that result from spontaneous decomposition of normal L-aspartyl and L-asparaginyl residues. It plays a role in the repair and/or degradation of damaged proteins. The chain is Protein-L-isoaspartate O-methyltransferase from Nitratidesulfovibrio vulgaris (strain DSM 19637 / Miyazaki F) (Desulfovibrio vulgaris).